Here is a 653-residue protein sequence, read N- to C-terminus: Threonine--tRNA ligase (653 aa).

The TGS domain occupies 1–61 (MIKITFPDGN…NEDAEVKLFK (61 aa)). Residues 243-542 (DHRKIGKELE…LIEHTAGKFP (300 aa)) form a catalytic region. 3 residues coordinate Zn(2+): cysteine 338, histidine 389, and histidine 519.

It belongs to the class-II aminoacyl-tRNA synthetase family. In terms of assembly, homodimer. Zn(2+) serves as cofactor.

The protein resides in the cytoplasm. It catalyses the reaction tRNA(Thr) + L-threonine + ATP = L-threonyl-tRNA(Thr) + AMP + diphosphate + H(+). Catalyzes the attachment of threonine to tRNA(Thr) in a two-step reaction: L-threonine is first activated by ATP to form Thr-AMP and then transferred to the acceptor end of tRNA(Thr). Also edits incorrectly charged L-seryl-tRNA(Thr). The sequence is that of Threonine--tRNA ligase from Porphyromonas gingivalis (strain ATCC 33277 / DSM 20709 / CIP 103683 / JCM 12257 / NCTC 11834 / 2561).